The primary structure comprises 171 residues: Ly6/PLAUR domain-containing protein 6 (171 aa).

The N-terminal stretch at 1–25 (MEPSPALAWLLLLSLVADCLKAAQS) is a signal peptide. The 95-residue stretch at 47-141 (FKCFTCEKAA…PRNDTDATFA (95 aa)) folds into the UPAR/Ly6 domain. Cystine bridges form between Cys49/Cys77, Cys52/Cys61, Cys70/Cys96, Cys102/Cys121, Cys107/Cys118, and Cys122/Cys127. A NxI motif motif is present at residues 88-90 (NSI). N-linked (GlcNAc...) asparagine glycosylation is found at Asn134 and Asn147. Asn147 is lipidated: GPI-anchor amidated asparagine. Positions 148–171 (QTNGHPHCVSVIVSCLWVWLGLTL) are cleaved as a propeptide — removed in mature form.

As to quaternary structure, interacts with nicotinic acetylcholine receptors (nAChRs) including CHRNA3, CHRNA4, CHRNA5, CHRNA6, CHRNA7, CHRNB2 and CHRNB4. Interacts (via NxI motif) with LRP6. As to expression, expressed at high levels in the cortex and cerebellum of the brain, at moderate levels in the lung, kidney, and liver, and at low levels in the heart and prostate (at protein level). Expressed in neurons (at protein level).

It localises to the secreted. It is found in the cytoplasm. Its subcellular location is the cell membrane. The protein localises to the synapse. The protein resides in the synaptosome. It localises to the membrane raft. It is found in the cell projection. Its subcellular location is the dendrite. The protein localises to the perikaryon. Acts as a modulator of nicotinic acetylcholine receptors (nAChRs) function in the brain. Inhibits nicotine-induced Ca(2+) influx through nAChRs. In vitro, specifically inhibits alpha-3:beta-4 and alpha-7 nAChR currents in an allosteric manner. Acts as a positive regulator of Wnt/beta-catenin signaling. This Rattus norvegicus (Rat) protein is Ly6/PLAUR domain-containing protein 6 (Lypd6).